A 371-amino-acid chain; its full sequence is Liposome tubulation protein MamY (371 aa).

Residues 1–18 (MLMNFVNNVSKTINGGAR) lie on the Cytoplasmic side of the membrane. Residues 19-39 (IVYVGSFSWAVLSLLFVTAFS) form a helical membrane-spanning segment. Residues 40-51 (GWNNIFSMLPHE) lie on the Lumenal side of the membrane. A helical transmembrane segment spans residues 52 to 72 (IFILVLTISLPIALIVLIFML). The Cytoplasmic segment spans residues 73-371 (SQIVRTVESV…LIDGTPISDA (299 aa)).

It belongs to the magnetosome MamY family. Probably interacts with MamX and MamZ proteins.

Its subcellular location is the magnetosome membrane. Functionally, may be involved in constriction of the cell inner membrane to form mature magnetosomes. Binds cardiolipin and liposomes. May function with MamX, MamZ amd Mms6 in biomineralization. The chain is Liposome tubulation protein MamY from Magnetospirillum gryphiswaldense (strain DSM 6361 / JCM 21280 / NBRC 15271 / MSR-1).